We begin with the raw amino-acid sequence, 215 residues long: Urease accessory protein UreG (215 aa).

15-22 is a binding site for GTP; the sequence is GPVGSGKT.

Belongs to the SIMIBI class G3E GTPase family. UreG subfamily. As to quaternary structure, homodimer. UreD, UreF and UreG form a complex that acts as a GTP-hydrolysis-dependent molecular chaperone, activating the urease apoprotein by helping to assemble the nickel containing metallocenter of UreC. The UreE protein probably delivers the nickel.

Its subcellular location is the cytoplasm. In terms of biological role, facilitates the functional incorporation of the urease nickel metallocenter. This process requires GTP hydrolysis, probably effectuated by UreG. The polypeptide is Urease accessory protein UreG (Alcanivorax borkumensis (strain ATCC 700651 / DSM 11573 / NCIMB 13689 / SK2)).